The following is a 286-amino-acid chain: Phosphatidylserine decarboxylase proenzyme (286 aa).

Residues aspartate 90, histidine 147, and serine 250 each act as charge relay system; for autoendoproteolytic cleavage activity in the active site. Residue serine 250 is the Schiff-base intermediate with substrate; via pyruvic acid; for decarboxylase activity of the active site. Serine 250 carries the pyruvic acid (Ser); by autocatalysis modification.

Belongs to the phosphatidylserine decarboxylase family. PSD-B subfamily. Prokaryotic type I sub-subfamily. In terms of assembly, heterodimer of a large membrane-associated beta subunit and a small pyruvoyl-containing alpha subunit. The cofactor is pyruvate. In terms of processing, is synthesized initially as an inactive proenzyme. Formation of the active enzyme involves a self-maturation process in which the active site pyruvoyl group is generated from an internal serine residue via an autocatalytic post-translational modification. Two non-identical subunits are generated from the proenzyme in this reaction, and the pyruvate is formed at the N-terminus of the alpha chain, which is derived from the carboxyl end of the proenzyme. The autoendoproteolytic cleavage occurs by a canonical serine protease mechanism, in which the side chain hydroxyl group of the serine supplies its oxygen atom to form the C-terminus of the beta chain, while the remainder of the serine residue undergoes an oxidative deamination to produce ammonia and the pyruvoyl prosthetic group on the alpha chain. During this reaction, the Ser that is part of the protease active site of the proenzyme becomes the pyruvoyl prosthetic group, which constitutes an essential element of the active site of the mature decarboxylase.

Its subcellular location is the cell membrane. The enzyme catalyses a 1,2-diacyl-sn-glycero-3-phospho-L-serine + H(+) = a 1,2-diacyl-sn-glycero-3-phosphoethanolamine + CO2. It participates in phospholipid metabolism; phosphatidylethanolamine biosynthesis; phosphatidylethanolamine from CDP-diacylglycerol: step 2/2. Functionally, catalyzes the formation of phosphatidylethanolamine (PtdEtn) from phosphatidylserine (PtdSer). The protein is Phosphatidylserine decarboxylase proenzyme of Psychromonas ingrahamii (strain DSM 17664 / CCUG 51855 / 37).